Reading from the N-terminus, the 212-residue chain is Glutathione S-transferase P 1 (212 aa).

The 82-residue stretch at 2 to 83 (PGYVLTYFPV…YLGNKHGLTG (82 aa)) folds into the GST N-terminal domain. Glutathione contacts are provided by residues Tyr8, Arg14, Trp39, Lys47, 54 to 55 (QL), and 67 to 68 (QS). Positions 85–206 (NDEERGHIDM…KSDARNKRPI (122 aa)) constitute a GST C-terminal domain.

Belongs to the GST superfamily. Pi family. In terms of assembly, homodimer. Expressed only in embryos. Not expressed in liver, lung, heart, kidney and ovary.

The protein resides in the cytoplasm. Its subcellular location is the mitochondrion. The protein localises to the nucleus. It catalyses the reaction RX + glutathione = an S-substituted glutathione + a halide anion + H(+). Conjugation of reduced glutathione to a wide number of exogenous and endogenous hydrophobic electrophiles. Highly active towards 1-chloro-2,4-dinitrobenzene and organic isothiocyanates, but shows no detectable activity towards 1,2-dichloro-4-nitrobenzene, p-nitrobenzylchloride, trans-4-phenyl-3-buten-2-one (tPBO) and ethacrynic acid. May be associated with cellular proliferation. In Xenopus laevis (African clawed frog), this protein is Glutathione S-transferase P 1 (gstp1).